Reading from the N-terminus, the 268-residue chain is TodF product hydratase (268 aa).

Belongs to the hydratase/decarboxylase family.

The protein operates within xenobiotic degradation; toluene degradation. Its function is as follows. Converts the product of 2-hydroxy-6-oxo-2,4-heptadienoate hydrolase. In Pseudomonas putida (strain ATCC 700007 / DSM 6899 / JCM 31910 / BCRC 17059 / LMG 24140 / F1), this protein is TodF product hydratase (todJ).